The following is a 666-amino-acid chain: Phosphoenolpyruvate carboxykinase (ATP) (666 aa).

Disordered regions lie at residues 1–68 (MATP…AHSP) and 91–132 (ASLT…HPAA). Over residues 48–58 (APTTPNRSAPT) the composition is skewed to polar residues. Positions 109 to 123 (KGEAAAQGAPSTPRA) are enriched in low complexity. An ATP-binding site is contributed by 364-371 (GLSGTGKT).

Belongs to the phosphoenolpyruvate carboxykinase (ATP) family.

It is found in the cytoplasm. The catalysed reaction is oxaloacetate + ATP = phosphoenolpyruvate + ADP + CO2. The protein operates within carbohydrate biosynthesis; gluconeogenesis. The polypeptide is Phosphoenolpyruvate carboxykinase (ATP) (Zea mays (Maize)).